The sequence spans 368 residues: Cytochrome b (368 aa).

4 helical membrane-spanning segments follow: residues 33 to 53 (FGSLLGLCLITQILTGIFLAM), 77 to 99 (WLIRSIHANSASMFFICIYTHTG), 112 to 132 (TWMVGVTLLLITILTAFLGYV), and 178 to 198 (FYALHFLFPFLISALSLMHII). Heme b contacts are provided by H83 and H97. The heme b site is built by H182 and H196. Residue H201 participates in a ubiquinone binding. The next 4 helical transmembrane spans lie at 224–244 (FSAKDLIGVILLWIMLGSVVL), 288–308 (LGGVLALIMSIAILYFLPMMN), 323–343 (IAFWLLVTNFIVLMWIGSKPV), and 345–365 (SPFEEIGQIMTVTYFSIYMIM).

This sequence belongs to the cytochrome b family. As to quaternary structure, the main subunits of complex b-c1 are: cytochrome b, cytochrome c1 and the Rieske protein. Requires heme b as cofactor.

Its subcellular location is the mitochondrion inner membrane. Its function is as follows. Component of the ubiquinol-cytochrome c reductase complex (complex III or cytochrome b-c1 complex) that is part of the mitochondrial respiratory chain. The b-c1 complex mediates electron transfer from ubiquinol to cytochrome c. Contributes to the generation of a proton gradient across the mitochondrial membrane that is then used for ATP synthesis. The polypeptide is Cytochrome b (mt:Cyt-b) (Bugula neritina (Brown bryozoan)).